A 305-amino-acid chain; its full sequence is MSKKLTFQEIILTLQQFWNDQDCMLMQAYDNEKGAGTMSPYTFLRAIGPEPWNAAYVEPSRRPADGRYGENPNRLYQHHQFQVVMKPSPSNIQELYLESLEKLGINPLEHDIRFVEDNWENPSTGSAGLGWEVWLDGMEITQFTYFQQVGGLATGPVTAEVTYGLERLASYIQEVDSVYDIEWADGVKYGEIFIQPEYEHSKYSFEISDQEMLLENFDKFEKEAGRALEEGLVHPAYDYVLKCSHTFNLLDARGAVSVTERAGYIARIRNLARVVAKTFVAERKRLGYPLLDEETRAKLLAEDAE.

The protein belongs to the class-II aminoacyl-tRNA synthetase family. Tetramer of two alpha and two beta subunits.

Its subcellular location is the cytoplasm. It catalyses the reaction tRNA(Gly) + glycine + ATP = glycyl-tRNA(Gly) + AMP + diphosphate. This chain is Glycine--tRNA ligase alpha subunit, found in Streptococcus pneumoniae serotype 4 (strain ATCC BAA-334 / TIGR4).